A 49-amino-acid chain; its full sequence is MKKEITNNETVKNLEFKGLLDESQKLAKVNDLWYFVKSKENRWILGSGH.

Functionally, suggested to be the precursor for an exported, modified peptide that has antimicrobial and/or signaling properties. Synthesis requires YydG and YydH; the peptide is proposed to be exported by the YydIJ transporter. In the absence of the transporter, the modified peptide activates the LiaRS two-component regulatory system, possibly by eliciting cell envelope stress. This activation can occur in trans in cocultured cells lacking either the transporter or the whole operon. The chain is Putative exported peptide YydF (yydF) from Bacillus subtilis (strain 168).